The chain runs to 157 residues: Urease accessory protein UreE (157 aa).

The protein belongs to the UreE family.

Its subcellular location is the cytoplasm. Involved in urease metallocenter assembly. Binds nickel. Probably functions as a nickel donor during metallocenter assembly. This Corynebacterium glutamicum (strain ATCC 13032 / DSM 20300 / JCM 1318 / BCRC 11384 / CCUG 27702 / LMG 3730 / NBRC 12168 / NCIMB 10025 / NRRL B-2784 / 534) protein is Urease accessory protein UreE.